The following is a 1744-amino-acid chain: Complement C4-A (1744 aa).

Positions 1-19 are cleaved as a signal peptide; the sequence is MRLLWGLIWASSFFTLSLQ. C68 and C97 are oxidised to a cystine. N-linked (GlcNAc...) asparagine glycosylation is present at N226. C635 and C669 are joined by a disulfide. A propeptide spanning residues 676-679 is cleaved from the precursor; the sequence is RKKR. 3 cysteine pairs are disulfide-bonded: C702/C728, C703/C735, and C716/C736. The 35-residue stretch at 702–736 folds into the Anaphylatoxin-like domain; that stretch reads CCQDGVTRLPMMRSCEQRAARVQQPDCREPFLSCC. A glycan (N-linked (GlcNAc...) asparagine) is linked at N862. S918 is modified (phosphoserine; by FAM20C). Residues 1010–1013 constitute a cross-link (isoglutamyl cysteine thioester (Cys-Gln)); that stretch reads CGEQ. T1244 carries O-linked (GalNAc...) threonine glycosylation. An N-linked (GlcNAc...) (complex) asparagine glycan is attached at N1328. N-linked (GlcNAc...) asparagine glycosylation is present at N1391. Sulfotyrosine is present on residues Y1417, Y1420, and Y1422. Positions 1447–1453 are excised as a propeptide; the sequence is RRNRRRR. 5 disulfides stabilise this stretch: C1471-C1535, C1583-C1588, C1595-C1673, C1618-C1742, and C1718-C1727. The 148-residue stretch at 1595–1742 folds into the NTR domain; that stretch reads CPRQRRALER…FLQEYGTQGC (148 aa).

As to quaternary structure, complement circulates in blood as a disulfide-linked trimer of an alpha, beta and gamma chain. In terms of assembly, complement C4b is composed of complement C4b-A, complement C4 beta and complement C4 gamma chains that are associated via disulfide bonds. Non-enzymatic component of the C3 convertase, also named C4bC2b, composed of the serine protease complement C2b (C2), as well as complement C4b. Non-enzymatic component of the C5 convertase, also named C4bC2bC3b, composed of the serine protease complement C2b (C2), complement C3b, as well as complement C4b. Post-translationally, prior to secretion, the single-chain precursor is enzymatically cleaved by plasminogen (PLG) to yield non-identical chains alpha, beta and gamma. During activation of the complement systems, the alpha chain is cleaved into C4a and C4b by different proteases depending on the complement pathway: C4b stays linked to the beta and gamma chains, while C4a is released in the plasma. The alpha chain is cleaved by C1S to generate C4a and C4b following activation by the classical complement system. The alpha chain is cleaved to generate C4a and C4b by MASP2 following activation by the lectin complement system. The alpha chain is cleaved by GZMK to generate C4a and C4b following activation by the GZMK complement system. Further degradation of C4b by C1 into the inactive fragments C4c and C4d blocks the generation of C3 convertase. The proteolytic cleavages often are incomplete so that many structural forms can be found in plasma. Upon activation, the internal thioester bond reacts with carbohydrate antigens on the target surface to form amide or ester bonds, leading to covalent association with the surface of pathogens. In terms of processing, ser-1236 of complement C4b interacts with complement C3b via a thioester linkage. Post-translationally, N- and O-glycosylated. O-glycosylated with a core 1 or possibly core 8 glycan. As to expression, complement component C4 is expressed at highest levels in the liver, at moderate levels in the adrenal cortex, adrenal medulla, thyroid gland, and the kidney, and at lowest levels in the heart, ovary, small intestine, thymus, pancreas and spleen. The extra-hepatic sites of expression may be important for the local protection and inflammatory response.

Its subcellular location is the secreted. It is found in the synapse. It localises to the cell projection. The protein localises to the axon. The protein resides in the dendrite. Its subcellular location is the cell surface. Its activity is regulated as follows. Specifically inhibited by nanobody hC4Nb8, inhibiting the classical complement pathway. Specifically inhibited by NbB5, NbE11 and NbH9 nanobodies, and to a lesser extent by NbH11 and NbE3 nanobodies. Its function is as follows. Precursor of non-enzymatic components of the classical, lectin and GZMK complement pathways, which consist in a cascade of proteins that leads to phagocytosis and breakdown of pathogens and signaling that strengthens the adaptive immune system. Functionally, non-enzymatic component of C3 and C5 convertases. Generated following cleavage by complement proteases (C1S, MASP2 or GZMK, depending on the complement pathway), it covalently attaches to the surface of pathogens, where it acts as an opsonin that marks the surface of antigens for removal. It then recruits the serine protease complement C2b to form the C3 and C5 convertases, which cleave and activate C3 and C5, respectively, the next components of the complement pathways. Complement C4b-A isotype is responsible for effective binding to form amide bonds with immune aggregates or protein antigens, while complement C4b-B isotype catalyzes the transacylation of the thioester carbonyl group to form ester bonds with carbohydrate antigens. Putative humoral mediator released following cleavage by complement proteases (C1S, MASP2 or GZMK, depending on the complement pathway). While it is strongly similar to anaphylatoxins, its role is unclear. Was reported to act as a mediator of local inflammatory process; however these effects were probably due to contamination with C3a and/C5a anaphylatoxins in biological assays. This is Complement C4-A from Homo sapiens (Human).